A 192-amino-acid polypeptide reads, in one-letter code: Adenylate kinase (192 aa).

12 to 17 (GSGKTT) serves as a coordination point for ATP. The NMP stretch occupies residues 34 to 63 (STGDLLRAEVASGSELGKTIDSFISKGNLV). AMP-binding positions include T35, R40, 61-63 (NLV), 88-91 (GYPR), and Q95. An LID region spans residues 130–136 (GRNRGAD). Position 131 (R131) interacts with ATP. R133 and R145 together coordinate AMP. R173 is a binding site for ATP.

It belongs to the adenylate kinase family. As to quaternary structure, monomer.

It is found in the cytoplasm. The enzyme catalyses AMP + ATP = 2 ADP. It participates in purine metabolism; AMP biosynthesis via salvage pathway; AMP from ADP: step 1/1. Functionally, catalyzes the reversible transfer of the terminal phosphate group between ATP and AMP. Plays an important role in cellular energy homeostasis and in adenine nucleotide metabolism. The sequence is that of Adenylate kinase from Campylobacter jejuni subsp. jejuni serotype O:6 (strain 81116 / NCTC 11828).